Consider the following 822-residue polypeptide: MAIRSWTPEGFVNKKLVRPASVSTNLSLELCTFPTTLGSSVAANALEQLFVVEKSLQGDYFTCSEEVKTFLKDITVAVKKLEEMRKNTVELLEIESMELSRLYFLLETVPNSIHRELEECIADARKLNIIEISQIKRKIETMNNEVKFLTNKISELKSMNEVLGAKQAELAKRHEQYVLLLNQTLEEKAAATIYINDTYTRMNFEREEIELQKQCMQETTQLIEKQKQDYLEKKEYLAIRIKETKQSCDDKRKETYYKKKELTRLQNKIIKMKQTVTSGSVMISDQSIEINILHEAITIWKKKVEDMRRLCESLEEKLSFFVTQKQNLDTTSTEKKNAFVNKIQKLGEKIYKLNTENEDLREKLSTLLKQYKATLKEEEAVSLKKQMLSEEHQKQMMVITQKEAFLSQREHDIKFMENGFGVLNDLNRASREAYGRQIEVMAKNRQREIQRCVINQWRIFCTRKRHAHWLQKIKLSLKKIIIQIEIVEQKRFQLLEETKHRKKEINHFVHLIETLKEQLAQDKKDYVKKEERLIEELGTYETLILNEIQINKVKEEELGETLPQLQVAEEDFREKNRMLRSLHSDVSAKKQDEKTMSNTIFRYRKDIIRCTDGTENMKREIKHLRDLESEKTHKHFEILKNLENEIYVNDQKMALLILENQKLREYLAYLKKEINEYASKQVVTVQHSGDLSWQLIVQHSHYSDLLSGFQIIIKELVGTGEDTMQEIKSLVAKLQYRDEKIESISTWLVGGFERLRRLMEEDSPASLSKEDLQKLGKKQKNQEILRFSPSSHARRLTLSRICKMLKKQSRSRKKKHRPRTII.

3 coiled-coil regions span residues 129–164, 223–397, and 510–537; these read IIEI…EVLG, IEKQ…KQMM, and HLIE…IEEL.

This is Coiled-coil domain-containing protein 175 (Ccdc175) from Mus musculus (Mouse).